The primary structure comprises 569 residues: Urease subunit alpha (569 aa).

Residues 131-569 (GSIDTHIHFI…VPMAQRYFLL (439 aa)) form the Urease domain. Ni(2+) is bound by residues histidine 136, histidine 138, and lysine 219. Position 219 is an N6-carboxylysine (lysine 219). Histidine 221 is a substrate binding site. Ni(2+) is bound by residues histidine 248 and histidine 274. The Proton donor role is filled by histidine 322. Aspartate 362 is a Ni(2+) binding site.

It belongs to the metallo-dependent hydrolases superfamily. Urease alpha subunit family. In terms of assembly, heterotrimer of UreA (gamma), UreB (beta) and UreC (alpha) subunits. Three heterotrimers associate to form the active enzyme. Ni cation is required as a cofactor. Post-translationally, carboxylation allows a single lysine to coordinate two nickel ions.

The protein localises to the cytoplasm. The enzyme catalyses urea + 2 H2O + H(+) = hydrogencarbonate + 2 NH4(+). The protein operates within nitrogen metabolism; urea degradation; CO(2) and NH(3) from urea (urease route): step 1/1. This Prochlorococcus marinus (strain MIT 9215) protein is Urease subunit alpha.